The following is a 64-amino-acid chain: Small ribosomal subunit protein bS21 (64 aa).

The tract at residues 39–64 (EKPSVKRKKKALAAKKRAVKKARKSF) is disordered. The span at 43 to 64 (VKRKKKALAAKKRAVKKARKSF) shows a compositional bias: basic residues.

It belongs to the bacterial ribosomal protein bS21 family.

This is Small ribosomal subunit protein bS21 (rpsU) from Myxococcus xanthus.